A 145-amino-acid polypeptide reads, in one-letter code: 3-dehydroquinate dehydratase (145 aa).

Tyr24 serves as the catalytic Proton acceptor. Substrate-binding residues include Asn76, His82, and Asp89. His102 (proton donor) is an active-site residue. Substrate-binding positions include 103–104 and Arg113; that span reads VS.

It belongs to the type-II 3-dehydroquinase family. As to quaternary structure, homododecamer.

The catalysed reaction is 3-dehydroquinate = 3-dehydroshikimate + H2O. The protein operates within metabolic intermediate biosynthesis; chorismate biosynthesis; chorismate from D-erythrose 4-phosphate and phosphoenolpyruvate: step 3/7. In terms of biological role, catalyzes a trans-dehydration via an enolate intermediate. The polypeptide is 3-dehydroquinate dehydratase (Janthinobacterium sp. (strain Marseille) (Minibacterium massiliensis)).